Reading from the N-terminus, the 207-residue chain is 8-oxoguanine DNA glycosylase/AP lyase (207 aa).

Catalysis depends on residues Lys-129 and Asp-147.

Belongs to the type-2 OGG1 family.

The catalysed reaction is 2'-deoxyribonucleotide-(2'-deoxyribose 5'-phosphate)-2'-deoxyribonucleotide-DNA = a 3'-end 2'-deoxyribonucleotide-(2,3-dehydro-2,3-deoxyribose 5'-phosphate)-DNA + a 5'-end 5'-phospho-2'-deoxyribonucleoside-DNA + H(+). Its function is as follows. Catalyzes the excision of an oxidatively damaged form of guanine (7,8-dihydro-8-oxoguanine = 8-oxoG) from DNA. Also cleaves the DNA backbone at apurinic/apyrimidinic sites (AP sites). The chain is 8-oxoguanine DNA glycosylase/AP lyase from Thermotoga maritima (strain ATCC 43589 / DSM 3109 / JCM 10099 / NBRC 100826 / MSB8).